Reading from the N-terminus, the 357-residue chain is Ferrochelatase (357 aa).

Fe cation contacts are provided by histidine 193 and glutamate 272.

The protein belongs to the ferrochelatase family.

Its subcellular location is the cytoplasm. It catalyses the reaction heme b + 2 H(+) = protoporphyrin IX + Fe(2+). It participates in porphyrin-containing compound metabolism; protoheme biosynthesis; protoheme from protoporphyrin-IX: step 1/1. Its function is as follows. Catalyzes the ferrous insertion into protoporphyrin IX. This is Ferrochelatase from Hyphomonas neptunium (strain ATCC 15444).